Here is a 370-residue protein sequence, read N- to C-terminus: Aminomethyltransferase (370 aa).

The protein belongs to the GcvT family. In terms of assembly, the glycine cleavage system is composed of four proteins: P, T, L and H.

It catalyses the reaction N(6)-[(R)-S(8)-aminomethyldihydrolipoyl]-L-lysyl-[protein] + (6S)-5,6,7,8-tetrahydrofolate = N(6)-[(R)-dihydrolipoyl]-L-lysyl-[protein] + (6R)-5,10-methylene-5,6,7,8-tetrahydrofolate + NH4(+). In terms of biological role, the glycine cleavage system catalyzes the degradation of glycine. This chain is Aminomethyltransferase, found in Stenotrophomonas maltophilia (strain K279a).